The following is a 217-amino-acid chain: Ribosomal RNA small subunit methyltransferase G (217 aa).

S-adenosyl-L-methionine contacts are provided by residues G74, L79, 125-126 (IQ), and R143.

This sequence belongs to the methyltransferase superfamily. RNA methyltransferase RsmG family.

Its subcellular location is the cytoplasm. The catalysed reaction is guanosine(527) in 16S rRNA + S-adenosyl-L-methionine = N(7)-methylguanosine(527) in 16S rRNA + S-adenosyl-L-homocysteine. Its function is as follows. Specifically methylates the N7 position of guanine in position 527 of 16S rRNA. The sequence is that of Ribosomal RNA small subunit methyltransferase G from Syntrophotalea carbinolica (strain DSM 2380 / NBRC 103641 / GraBd1) (Pelobacter carbinolicus).